Reading from the N-terminus, the 425-residue chain is 2-methylserine hydroxymethyltransferase (425 aa).

(6S)-5,6,7,8-tetrahydrofolate-binding positions include L126 and G130–L132. K235 carries the N6-(pyridoxal phosphate)lysine modification. E251 is a (6S)-5,6,7,8-tetrahydrofolate binding site.

Belongs to the SHMT family. As to quaternary structure, homodimer. Pyridoxal 5'-phosphate is required as a cofactor.

It is found in the cytoplasm. It catalyses the reaction (6R)-5,10-methylene-5,6,7,8-tetrahydrofolate + D-alanine + H2O = 2-methylserine + (6S)-5,6,7,8-tetrahydrofolate. Its pathway is one-carbon metabolism; tetrahydrofolate interconversion. Inhibited by hydroxylamine and sodium borohydride. In terms of biological role, catalyzes the reversible interconversion of alpha-methyl-L-serine to D-alanine with tetrahydrofolate (THF) serving as the one-carbon carrier. Cannot use alpha-methyl-D-serine, L-serine, D-serine or L-alanine. In Paracoccus sp, this protein is 2-methylserine hydroxymethyltransferase.